The primary structure comprises 155 residues: Small ribosomal subunit protein uS7c (155 aa).

The protein belongs to the universal ribosomal protein uS7 family. Part of the 30S ribosomal subunit.

Its subcellular location is the plastid. It localises to the chloroplast. Functionally, one of the primary rRNA binding proteins, it binds directly to 16S rRNA where it nucleates assembly of the head domain of the 30S subunit. This Gunnera chilensis (Chilean rhubarb) protein is Small ribosomal subunit protein uS7c (rps7).